Consider the following 658-residue polypeptide: Structure-specific endonuclease subunit SLX4 (658 aa).

3 disordered regions span residues 17 to 37, 74 to 123, and 327 to 383; these read VDSD…IPGD, GATE…KSIT, and QPGV…QVLQ. 2 stretches are compositionally biased toward low complexity: residues 75–90 and 99–108; these read ATES…PPAK and KAAGRTSTGT. The segment covering 365–374 has biased composition (polar residues); the sequence is FPKSPTSTPE.

This sequence belongs to the SLX4 family. As to quaternary structure, forms a heterodimer with SLX1. In terms of processing, phosphorylated in response to DNA damage.

Its subcellular location is the nucleus. Functionally, regulatory subunit of the SLX1-SLX4 structure-specific endonuclease that resolves DNA secondary structures generated during DNA repair and recombination. Has endonuclease activity towards branched DNA substrates, introducing single-strand cuts in duplex DNA close to junctions with ss-DNA. This chain is Structure-specific endonuclease subunit SLX4, found in Lachancea thermotolerans (strain ATCC 56472 / CBS 6340 / NRRL Y-8284) (Yeast).